The primary structure comprises 232 residues: 2-C-methyl-D-erythritol 4-phosphate cytidylyltransferase (232 aa).

This sequence belongs to the IspD/TarI cytidylyltransferase family. IspD subfamily.

The catalysed reaction is 2-C-methyl-D-erythritol 4-phosphate + CTP + H(+) = 4-CDP-2-C-methyl-D-erythritol + diphosphate. The protein operates within isoprenoid biosynthesis; isopentenyl diphosphate biosynthesis via DXP pathway; isopentenyl diphosphate from 1-deoxy-D-xylulose 5-phosphate: step 2/6. Its function is as follows. Catalyzes the formation of 4-diphosphocytidyl-2-C-methyl-D-erythritol from CTP and 2-C-methyl-D-erythritol 4-phosphate (MEP). This Geobacter metallireducens (strain ATCC 53774 / DSM 7210 / GS-15) protein is 2-C-methyl-D-erythritol 4-phosphate cytidylyltransferase.